The sequence spans 260 residues: Cytochrome c oxidase subunit 2 (260 aa).

The Mitochondrial intermembrane segment spans residues 1–39; it reads MKFEWLFLTIAPCDAAEPWQLGFQDAATPMMQGIIDLHH. Residues 40-61 form a helical membrane-spanning segment; the sequence is DIFFFLILILVFVSRILVRALW. Over 62 to 76 the chain is Mitochondrial matrix; the sequence is HFHYKKNPIPQRIVH. A helical membrane pass occupies residues 77-104; that stretch reads GTTIEILRTIFPSIIPMFIAIPSFALLY. The Mitochondrial intermembrane portion of the chain corresponds to 105-260; it reads SMDEVVVDPA…QLIPQTTGEA (156 aa). Cu cation-binding residues include histidine 186, cysteine 221, glutamate 223, cysteine 225, and histidine 229. Glutamate 223 provides a ligand contact to Mg(2+).

This sequence belongs to the cytochrome c oxidase subunit 2 family. Component of the cytochrome c oxidase (complex IV, CIV), a multisubunit enzyme composed of a catalytic core of 3 subunits and several supernumerary subunits. The complex exists as a monomer or a dimer and forms supercomplexes (SCs) in the inner mitochondrial membrane with ubiquinol-cytochrome c oxidoreductase (cytochrome b-c1 complex, complex III, CIII). The cofactor is Cu cation.

Its subcellular location is the mitochondrion inner membrane. The enzyme catalyses 4 Fe(II)-[cytochrome c] + O2 + 8 H(+)(in) = 4 Fe(III)-[cytochrome c] + 2 H2O + 4 H(+)(out). Its function is as follows. Component of the cytochrome c oxidase, the last enzyme in the mitochondrial electron transport chain which drives oxidative phosphorylation. The respiratory chain contains 3 multisubunit complexes succinate dehydrogenase (complex II, CII), ubiquinol-cytochrome c oxidoreductase (cytochrome b-c1 complex, complex III, CIII) and cytochrome c oxidase (complex IV, CIV), that cooperate to transfer electrons derived from NADH and succinate to molecular oxygen, creating an electrochemical gradient over the inner membrane that drives transmembrane transport and the ATP synthase. Cytochrome c oxidase is the component of the respiratory chain that catalyzes the reduction of oxygen to water. Electrons originating from reduced cytochrome c in the intermembrane space (IMS) are transferred via the dinuclear copper A center (CU(A)) of subunit 2 and heme A of subunit 1 to the active site in subunit 1, a binuclear center (BNC) formed by heme A3 and copper B (CU(B)). The BNC reduces molecular oxygen to 2 water molecules using 4 electrons from cytochrome c in the IMS and 4 protons from the mitochondrial matrix. This is Cytochrome c oxidase subunit 2 (COX2) from Glycine max (Soybean).